A 363-amino-acid chain; its full sequence is Phosphoserine aminotransferase (363 aa).

Residue arginine 42 coordinates L-glutamate. Residues tryptophan 105, threonine 155, aspartate 175, and glutamine 198 each contribute to the pyridoxal 5'-phosphate site. The residue at position 199 (lysine 199) is an N6-(pyridoxal phosphate)lysine. A pyridoxal 5'-phosphate-binding site is contributed by 240-241; that stretch reads NT.

The protein belongs to the class-V pyridoxal-phosphate-dependent aminotransferase family. SerC subfamily. In terms of assembly, homodimer. Pyridoxal 5'-phosphate is required as a cofactor.

It is found in the cytoplasm. It carries out the reaction O-phospho-L-serine + 2-oxoglutarate = 3-phosphooxypyruvate + L-glutamate. It catalyses the reaction 4-(phosphooxy)-L-threonine + 2-oxoglutarate = (R)-3-hydroxy-2-oxo-4-phosphooxybutanoate + L-glutamate. It participates in amino-acid biosynthesis; L-serine biosynthesis; L-serine from 3-phospho-D-glycerate: step 2/3. It functions in the pathway cofactor biosynthesis; pyridoxine 5'-phosphate biosynthesis; pyridoxine 5'-phosphate from D-erythrose 4-phosphate: step 3/5. Catalyzes the reversible conversion of 3-phosphohydroxypyruvate to phosphoserine and of 3-hydroxy-2-oxo-4-phosphonooxybutanoate to phosphohydroxythreonine. In Herminiimonas arsenicoxydans, this protein is Phosphoserine aminotransferase.